A 709-amino-acid chain; its full sequence is Protein transport protein SEC39 (709 aa).

The protein belongs to the SEC39 family. Component of a peripheral membrane protein complex consisting of DSL1, SEC39/DSL3 and TIP20. Bound to a SNARE complex consisting of UFE1, USE1, SEC20 and SEC22 or YKT6 through direct interaction of TIP20 with SEC20. Interacts with TIP20 and DSL1.

Its subcellular location is the endoplasmic reticulum membrane. Functionally, required for protein transport between the Golgi and the endoplasmic reticulum. May contribute to tethering of coatomer-coated retrograde transport vesicles to the ER membrane through interaction with and stabilization of the SNARE complex. The chain is Protein transport protein SEC39 from Saccharomyces cerevisiae (strain ATCC 204508 / S288c) (Baker's yeast).